The primary structure comprises 130 residues: Glycine cleavage system H protein (130 aa).

The Lipoyl-binding domain maps to 24-106 (IYSVGITEHA…YADGWLFRIR (83 aa)). Lysine 65 carries the N6-lipoyllysine modification.

It belongs to the GcvH family. The glycine cleavage system is composed of four proteins: P, T, L and H. (R)-lipoate serves as cofactor.

The glycine cleavage system catalyzes the degradation of glycine. The H protein shuttles the methylamine group of glycine from the P protein to the T protein. In Pectobacterium carotovorum subsp. carotovorum (strain PC1), this protein is Glycine cleavage system H protein.